A 650-amino-acid chain; its full sequence is NAC domain-containing protein 54 (650 aa).

The NAC domain occupies Leu6–Lys156. The DNA-binding element occupies Val105 to Lys162.

As to expression, expressed in leaves, roots and flowers.

It is found in the nucleus. In terms of biological role, transcription factor that functions as a regulator of the jasmonate (JA) signaling pathway. May regulate the expression of genes encoding JA biosynthetic enzymes, such as lipoxygenase 7 (CM-LOX1), allene oxide synthase 2 (AOS2) and OPDA reductase 7 (OPR7). Involved in abscisic acid-induced leaf senescence. Activates the abscisic acid (ABA) signaling-associated gene ABI5 and the senescence-associated gene NYC1 by directly binding to the mitochondrial dysfunction motif (MDM) present in their promoters. Possesses transcriptional activator activity in yeast. Required for the multiplication of the rice dwarf virus (RDV). This Oryza sativa subsp. japonica (Rice) protein is NAC domain-containing protein 54.